A 204-amino-acid chain; its full sequence is Outer-membrane lipoprotein carrier protein (204 aa).

A signal peptide spans 1–21 (MKKIAVTCALLSAFAVSSVWA). Residues 169-204 (QRSSYQLKSQQNGAVDMSKFTFTPPQGVTVDDQRNK) form a disordered region. Polar residues predominate over residues 171 to 181 (SSYQLKSQQNG).

The protein belongs to the LolA family. As to quaternary structure, monomer.

The protein localises to the periplasm. Its function is as follows. Participates in the translocation of lipoproteins from the inner membrane to the outer membrane. Only forms a complex with a lipoprotein if the residue after the N-terminal Cys is not an aspartate (The Asp acts as a targeting signal to indicate that the lipoprotein should stay in the inner membrane). The protein is Outer-membrane lipoprotein carrier protein of Cronobacter sakazakii (strain ATCC BAA-894) (Enterobacter sakazakii).